A 946-amino-acid chain; its full sequence is Bifunctional glutamine synthetase adenylyltransferase/adenylyl-removing enzyme (946 aa).

Residues 1–440 (MKPLSSPLQQ…VFNELIGDDE (440 aa)) are adenylyl removase. The adenylyl transferase stretch occupies residues 449–946 (SEQWRELWQD…ASWQKWLVEE (498 aa)).

This sequence belongs to the GlnE family. Mg(2+) serves as cofactor.

The catalysed reaction is [glutamine synthetase]-O(4)-(5'-adenylyl)-L-tyrosine + phosphate = [glutamine synthetase]-L-tyrosine + ADP. The enzyme catalyses [glutamine synthetase]-L-tyrosine + ATP = [glutamine synthetase]-O(4)-(5'-adenylyl)-L-tyrosine + diphosphate. Its function is as follows. Involved in the regulation of glutamine synthetase GlnA, a key enzyme in the process to assimilate ammonia. When cellular nitrogen levels are high, the C-terminal adenylyl transferase (AT) inactivates GlnA by covalent transfer of an adenylyl group from ATP to specific tyrosine residue of GlnA, thus reducing its activity. Conversely, when nitrogen levels are low, the N-terminal adenylyl removase (AR) activates GlnA by removing the adenylyl group by phosphorolysis, increasing its activity. The regulatory region of GlnE binds the signal transduction protein PII (GlnB) which indicates the nitrogen status of the cell. The chain is Bifunctional glutamine synthetase adenylyltransferase/adenylyl-removing enzyme from Escherichia coli O45:K1 (strain S88 / ExPEC).